The primary structure comprises 416 residues: Dihydrolipoyllysine-residue succinyltransferase component of 2-oxoglutarate dehydrogenase complex (416 aa).

The 76-residue stretch at I3–D78 folds into the Lipoyl-binding domain. N6-lipoyllysine is present on K44. The Peripheral subunit-binding (PSBD) domain maps to V115–A152. Active-site residues include H387 and D391.

Belongs to the 2-oxoacid dehydrogenase family. Forms a 24-polypeptide structural core with octahedral symmetry. Part of the 2-oxoglutarate dehydrogenase (OGDH) complex composed of E1 (2-oxoglutarate dehydrogenase), E2 (dihydrolipoamide succinyltransferase) and E3 (dihydrolipoamide dehydrogenase); the complex contains multiple copies of the three enzymatic components (E1, E2 and E3). (R)-lipoate serves as cofactor.

The catalysed reaction is N(6)-[(R)-dihydrolipoyl]-L-lysyl-[protein] + succinyl-CoA = N(6)-[(R)-S(8)-succinyldihydrolipoyl]-L-lysyl-[protein] + CoA. Its pathway is amino-acid degradation; L-lysine degradation via saccharopine pathway; glutaryl-CoA from L-lysine: step 6/6. In terms of biological role, E2 component of the 2-oxoglutarate dehydrogenase (OGDH) complex which catalyzes the second step in the conversion of 2-oxoglutarate to succinyl-CoA and CO(2). This Cupriavidus necator (strain ATCC 17699 / DSM 428 / KCTC 22496 / NCIMB 10442 / H16 / Stanier 337) (Ralstonia eutropha) protein is Dihydrolipoyllysine-residue succinyltransferase component of 2-oxoglutarate dehydrogenase complex (sucB).